Reading from the N-terminus, the 116-residue chain is Ribosome-binding factor A (116 aa).

Belongs to the RbfA family. Monomer. Binds 30S ribosomal subunits, but not 50S ribosomal subunits or 70S ribosomes.

The protein localises to the cytoplasm. Functionally, one of several proteins that assist in the late maturation steps of the functional core of the 30S ribosomal subunit. Associates with free 30S ribosomal subunits (but not with 30S subunits that are part of 70S ribosomes or polysomes). Required for efficient processing of 16S rRNA. May interact with the 5'-terminal helix region of 16S rRNA. The sequence is that of Ribosome-binding factor A from Streptococcus pneumoniae (strain Hungary19A-6).